Reading from the N-terminus, the 466-residue chain is Soluble pyridine nucleotide transhydrogenase (466 aa).

36-45 (ERYHQVGGGC) is a binding site for FAD.

Belongs to the class-I pyridine nucleotide-disulfide oxidoreductase family. FAD serves as cofactor.

Its subcellular location is the cytoplasm. It carries out the reaction NAD(+) + NADPH = NADH + NADP(+). In terms of biological role, conversion of NADPH, generated by peripheral catabolic pathways, to NADH, which can enter the respiratory chain for energy generation. This is Soluble pyridine nucleotide transhydrogenase from Colwellia psychrerythraea (strain 34H / ATCC BAA-681) (Vibrio psychroerythus).